Reading from the N-terminus, the 129-residue chain is Small ribosomal subunit protein uS11 (129 aa).

This sequence belongs to the universal ribosomal protein uS11 family. In terms of assembly, part of the 30S ribosomal subunit. Interacts with proteins S7 and S18. Binds to IF-3.

Located on the platform of the 30S subunit, it bridges several disparate RNA helices of the 16S rRNA. Forms part of the Shine-Dalgarno cleft in the 70S ribosome. This is Small ribosomal subunit protein uS11 from Nitrosomonas eutropha (strain DSM 101675 / C91 / Nm57).